We begin with the raw amino-acid sequence, 127 residues long: Ribonuclease P protein component (127 aa).

It belongs to the RnpA family. As to quaternary structure, consists of a catalytic RNA component (M1 or rnpB) and a protein subunit.

The enzyme catalyses Endonucleolytic cleavage of RNA, removing 5'-extranucleotides from tRNA precursor.. Functionally, RNaseP catalyzes the removal of the 5'-leader sequence from pre-tRNA to produce the mature 5'-terminus. It can also cleave other RNA substrates such as 4.5S RNA. The protein component plays an auxiliary but essential role in vivo by binding to the 5'-leader sequence and broadening the substrate specificity of the ribozyme. This Corynebacterium urealyticum (strain ATCC 43042 / DSM 7109) protein is Ribonuclease P protein component.